A 514-amino-acid chain; its full sequence is Protein nucleotidyltransferase YdiU (514 aa).

ATP contacts are provided by G111, G113, R114, K134, D146, G147, R197, and R204. Catalysis depends on D276, which acts as the Proton acceptor. Positions 277 and 286 each coordinate Mg(2+). An ATP-binding site is contributed by D286.

It belongs to the SELO family. Requires Mg(2+) as cofactor. It depends on Mn(2+) as a cofactor.

The enzyme catalyses L-seryl-[protein] + ATP = 3-O-(5'-adenylyl)-L-seryl-[protein] + diphosphate. It carries out the reaction L-threonyl-[protein] + ATP = 3-O-(5'-adenylyl)-L-threonyl-[protein] + diphosphate. It catalyses the reaction L-tyrosyl-[protein] + ATP = O-(5'-adenylyl)-L-tyrosyl-[protein] + diphosphate. The catalysed reaction is L-histidyl-[protein] + UTP = N(tele)-(5'-uridylyl)-L-histidyl-[protein] + diphosphate. The enzyme catalyses L-seryl-[protein] + UTP = O-(5'-uridylyl)-L-seryl-[protein] + diphosphate. It carries out the reaction L-tyrosyl-[protein] + UTP = O-(5'-uridylyl)-L-tyrosyl-[protein] + diphosphate. Its function is as follows. Nucleotidyltransferase involved in the post-translational modification of proteins. It can catalyze the addition of adenosine monophosphate (AMP) or uridine monophosphate (UMP) to a protein, resulting in modifications known as AMPylation and UMPylation. This chain is Protein nucleotidyltransferase YdiU, found in Rhodococcus jostii (strain RHA1).